The sequence spans 325 residues: Plasminogen (325 aa).

Kringle domains follow at residues 80–146 (ACVK…VPSC) and 159–217 (LTPA…VLSV). 4 disulfide bridges follow: Cys-81/Cys-146, Cys-102/Cys-135, Cys-124/Cys-141, and Cys-188/Cys-212.

The protein belongs to the peptidase S1 family. Plasminogen subfamily.

Its subcellular location is the secreted. The catalysed reaction is Preferential cleavage: Lys-|-Xaa &gt; Arg-|-Xaa, higher selectivity than trypsin. Converts fibrin into soluble products.. Plasmin dissolves the fibrin of blood clots and acts as a proteolytic factor in a variety of other processes including embryonic development, tissue remodeling, tumor invasion, and inflammation. This Petromyzon marinus (Sea lamprey) protein is Plasminogen.